Reading from the N-terminus, the 375-residue chain is Platelet-derived growth factor receptor-like protein (375 aa).

An N-terminal signal peptide occupies residues 1 to 21 (MKIWLLLGLLLMHEALEDVTG). A disordered region spans residues 20 to 64 (TGQHPPKNKRPKEPGENRIKPTNKKVKPKIPKIKDRDSADPTPKT). Residues 40–50 (PTNKKVKPKIP) are compositionally biased toward basic residues. The 98-residue stretch at 62–159 (PKTQSIMTQM…GYVCRRDEAK (98 aa)) folds into the Ig-like C2-type 1 domain. Cys96 and Cys143 are oxidised to a cystine. 2 N-linked (GlcNAc...) asparagine glycosylation sites follow: Asn132 and Asn219. Residues 272–373 (PSTTILASSN…GQTTVATTVE (102 aa)) enclose the Ig-like C2-type 2 domain. The cysteines at positions 293 and 357 are disulfide-linked.

In terms of assembly, forms a complex composed of PDGFRL, TNK2 and GRB2.

It is found in the secreted. The chain is Platelet-derived growth factor receptor-like protein (PDGFRL) from Bos taurus (Bovine).